The chain runs to 301 residues: Acetyl-coenzyme A carboxylase carboxyl transferase subunit beta (301 aa).

Residues 25–294 (LWIKDPSTGE…NSDAPAPQKP (270 aa)) form the CoA carboxyltransferase N-terminal domain.

This sequence belongs to the AccD/PCCB family. As to quaternary structure, acetyl-CoA carboxylase is a heterohexamer composed of biotin carboxyl carrier protein (AccB), biotin carboxylase (AccC) and two subunits each of ACCase subunit alpha (AccA) and ACCase subunit beta (AccD).

The protein localises to the cytoplasm. The enzyme catalyses N(6)-carboxybiotinyl-L-lysyl-[protein] + acetyl-CoA = N(6)-biotinyl-L-lysyl-[protein] + malonyl-CoA. It participates in lipid metabolism; malonyl-CoA biosynthesis; malonyl-CoA from acetyl-CoA: step 1/1. Component of the acetyl coenzyme A carboxylase (ACC) complex. Biotin carboxylase (BC) catalyzes the carboxylation of biotin on its carrier protein (BCCP) and then the CO(2) group is transferred by the transcarboxylase to acetyl-CoA to form malonyl-CoA. This Brucella canis (strain ATCC 23365 / NCTC 10854 / RM-666) protein is Acetyl-coenzyme A carboxylase carboxyl transferase subunit beta.